The sequence spans 352 residues: C-C chemokine receptor type 5 (352 aa).

Over M1–A30 the chain is Extracellular. Residue Y3 is modified to Sulfotyrosine. Residues S6 and S7 are each glycosylated (O-linked (GalNAc...) serine). 3 positions are modified to sulfotyrosine: Y10, Y14, and Y15. Intrachain disulfides connect C20/C269 and C101/C178. A helical transmembrane segment spans residues R31–C58. Residues K59 to Y68 lie on the Cytoplasmic side of the membrane. The helical transmembrane segment at L69–Y89 threads the bilayer. At A90–Q102 the chain is on the extracellular side. Residues L103–I124 traverse the membrane as a helical segment. The Cytoplasmic segment spans residues D125 to T141. Residues V142–F166 form a helical membrane-spanning segment. Residues T167–I198 lie on the Extracellular side of the membrane. Residues V199–L218 traverse the membrane as a helical segment. Over K219–R235 the chain is Cytoplasmic. Residues L236 to F260 traverse the membrane as a helical segment. At Q261 to Q277 the chain is on the extracellular side. Residues A278–G301 form a helical membrane-spanning segment. At E302 to L352 the chain is on the cytoplasmic side. S-palmitoyl cysteine attachment occurs at residues C321, C323, and C324. 4 positions are modified to phosphoserine; by BARK1: S336, S337, S342, and S349.

Belongs to the G-protein coupled receptor 1 family. In terms of assembly, interacts with PRAF2. Efficient ligand binding to CCL3/MIP-1alpha and CCL4/MIP-1beta requires sulfation, O-glycosylation and sialic acid modifications. Glycosylation on Ser-6 is required for efficient binding of CCL4. Interacts with GRK2. Interacts with ARRB1 and ARRB2. Interacts with CNIH4. Interacts with S100A4; this interaction stimulates T-lymphocyte chemotaxis. In terms of processing, sulfated on at least 2 of the N-terminal tyrosines. Sulfation is required for efficient binding of the chemokines, CCL3 and CCL4. Post-translationally, palmitoylation in the C-terminal is important for cell surface expression. Phosphorylation on serine residues in the C-terminal is stimulated by binding CC chemokines especially by APO-RANTES. In terms of processing, O-glycosylated, but not N-glycosylated. Ser-6 appears to be the major site even if Ser-7 may be also O-glycosylated. Also sialylated glycans present which contribute to chemokine binding. Thr-16 and Ser-17 may also be glycosylated and, if so, with small moieties such as a T-antigen.

It localises to the cell membrane. Its function is as follows. Receptor for a number of inflammatory CC-chemokines including CCL3/MIP-1-alpha, CCL4/MIP-1-beta and RANTES and subsequently transduces a signal by increasing the intracellular calcium ion level. May play a role in the control of granulocytic lineage proliferation or differentiation. Participates in T-lymphocyte migration to the infection site by acting as a chemotactic receptor. This is C-C chemokine receptor type 5 (CCR5) from Cercocebus atys (Sooty mangabey).